The following is a 282-amino-acid chain: 2-dehydro-3-deoxyphosphooctonate aldolase (282 aa).

This sequence belongs to the KdsA family.

Its subcellular location is the cytoplasm. The catalysed reaction is D-arabinose 5-phosphate + phosphoenolpyruvate + H2O = 3-deoxy-alpha-D-manno-2-octulosonate-8-phosphate + phosphate. It participates in carbohydrate biosynthesis; 3-deoxy-D-manno-octulosonate biosynthesis; 3-deoxy-D-manno-octulosonate from D-ribulose 5-phosphate: step 2/3. The protein operates within bacterial outer membrane biogenesis; lipopolysaccharide biosynthesis. The chain is 2-dehydro-3-deoxyphosphooctonate aldolase from Shewanella sp. (strain MR-4).